We begin with the raw amino-acid sequence, 623 residues long: Leucine-rich repeat, immunoglobulin-like domain and transmembrane domain-containing protein 1 (623 aa).

The N-terminal stretch at 1–21 (MRVALGMLWLLALAWPPQARG) is a signal peptide. An LRRNT domain is found at 22-59 (FCPSQCSCSLHIMGDGSKARTVVCNDPDMTLPPASIPP). The Lumenal segment spans residues 22-526 (FCPSQCSCSL…EVVDAENTQQ (505 aa)). 5 LRR repeats span residues 60 to 81 (DTSR…AFRP), 84 to 105 (RLEQ…MLRG), 108 to 129 (RLRE…ALRD), 132 to 153 (KLRL…AARF), and 156 to 177 (NLTF…LIVS). N-linked (GlcNAc...) asparagine glycosylation is present at Asn-156. The region spanning 201-253 (NPWACDCRLYDLVHLLDGWAPNLAFIETELRCASPRSLAGVAFSQLELRKCQG) is the LRRCT domain. Residues 266–335 (LLGGTALLRC…YICQAKNFLG (70 aa)) form the Ig-like C2-type domain. Cys-275 and Cys-328 are oxidised to a cystine. Asn-296 and Asn-455 each carry an N-linked (GlcNAc...) asparagine glycan. Positions 430-518 (MVRSVKVVGD…QCVIFSTNEV (89 aa)) constitute a Fibronectin type-III domain. Residues 527–547 (LINVVVISVAIVIALPLTLLV) form a helical membrane-spanning segment. Over 548–623 (CCSALQKRCR…GGRRINEYFC (76 aa)) the chain is Cytoplasmic. Residues 571–594 (YVNLERLGYSEDGLEELSRHSVSE) form an LRR 6 repeat.

May form a homodimer. Interacts with LRIT2; may form a heterodimer with LRIT2. Interacts (via its N-terminal extracellular domain) with metabotropic glutamate receptor GRM6. Interacts (via its extreme C-terminus) with the scaffold protein FRMPD2 (via the third PDZ domain); the interaction leads to their colocalization in photoreceptor synapses.

The protein resides in the endoplasmic reticulum membrane. It localises to the cell projection. Its subcellular location is the dendrite. Its function is as follows. Photoreceptor synaptic protein essential for normal vision. Involved in synapse formation in cone photoreceptor cells. This is Leucine-rich repeat, immunoglobulin-like domain and transmembrane domain-containing protein 1 (LRIT1) from Homo sapiens (Human).